We begin with the raw amino-acid sequence, 166 residues long: NAD(P)H-quinone oxidoreductase subunit I, chloroplastic (166 aa).

2 4Fe-4S ferredoxin-type domains span residues 55-84 and 95-124; these read GRIH…VDWK and LNYS…MTEE. [4Fe-4S] cluster-binding residues include C64, C67, C70, C74, C104, C107, C110, and C114.

Belongs to the complex I 23 kDa subunit family. In terms of assembly, NDH is composed of at least 16 different subunits, 5 of which are encoded in the nucleus. [4Fe-4S] cluster serves as cofactor.

The protein localises to the plastid. The protein resides in the chloroplast thylakoid membrane. The catalysed reaction is a plastoquinone + NADH + (n+1) H(+)(in) = a plastoquinol + NAD(+) + n H(+)(out). It catalyses the reaction a plastoquinone + NADPH + (n+1) H(+)(in) = a plastoquinol + NADP(+) + n H(+)(out). Its function is as follows. NDH shuttles electrons from NAD(P)H:plastoquinone, via FMN and iron-sulfur (Fe-S) centers, to quinones in the photosynthetic chain and possibly in a chloroplast respiratory chain. The immediate electron acceptor for the enzyme in this species is believed to be plastoquinone. Couples the redox reaction to proton translocation, and thus conserves the redox energy in a proton gradient. The sequence is that of NAD(P)H-quinone oxidoreductase subunit I, chloroplastic from Melampodium leucanthum (Black foot daisy).